A 168-amino-acid chain; its full sequence is MKSNDKVIIGRLARPYGLRGWIKVVSFTHPIDNLLNHPTWQIQHNNEWQPLKLQAGKLHEPFLVVKLENIDDPETAKHYTNDLIAIERGALGALKEGDYYWTDLIGLAVVNTHGIELGTVDSLIETGSNDVLVVRSKERERLIPYTSYTIQSIDLEKKIIVVEWDADF.

One can recognise a PRC barrel domain in the interval 95–168 (KEGDYYWTDL…IIVVEWDADF (74 aa)).

It belongs to the RimM family. As to quaternary structure, binds ribosomal protein uS19.

It localises to the cytoplasm. In terms of biological role, an accessory protein needed during the final step in the assembly of 30S ribosomal subunit, possibly for assembly of the head region. Essential for efficient processing of 16S rRNA. May be needed both before and after RbfA during the maturation of 16S rRNA. It has affinity for free ribosomal 30S subunits but not for 70S ribosomes. In Coxiella burnetii (strain CbuK_Q154) (Coxiella burnetii (strain Q154)), this protein is Ribosome maturation factor RimM.